A 236-amino-acid chain; its full sequence is Ubiquinone biosynthesis O-methyltransferase (236 aa).

S-adenosyl-L-methionine-binding residues include R39, G59, D80, and M124.

This sequence belongs to the methyltransferase superfamily. UbiG/COQ3 family.

The catalysed reaction is a 3-demethylubiquinol + S-adenosyl-L-methionine = a ubiquinol + S-adenosyl-L-homocysteine + H(+). It catalyses the reaction a 3-(all-trans-polyprenyl)benzene-1,2-diol + S-adenosyl-L-methionine = a 2-methoxy-6-(all-trans-polyprenyl)phenol + S-adenosyl-L-homocysteine + H(+). It participates in cofactor biosynthesis; ubiquinone biosynthesis. Its function is as follows. O-methyltransferase that catalyzes the 2 O-methylation steps in the ubiquinone biosynthetic pathway. This is Ubiquinone biosynthesis O-methyltransferase from Shewanella pealeana (strain ATCC 700345 / ANG-SQ1).